A 322-amino-acid polypeptide reads, in one-letter code: 4-hydroxythreonine-4-phosphate dehydrogenase (322 aa).

A substrate-binding site is contributed by T132. The a divalent metal cation site is built by H160, H205, and H260. 3 residues coordinate substrate: K268, N277, and R286.

This sequence belongs to the PdxA family. In terms of assembly, homodimer. Zn(2+) serves as cofactor. Mg(2+) is required as a cofactor. The cofactor is Co(2+).

It localises to the cytoplasm. It catalyses the reaction 4-(phosphooxy)-L-threonine + NAD(+) = 3-amino-2-oxopropyl phosphate + CO2 + NADH. It functions in the pathway cofactor biosynthesis; pyridoxine 5'-phosphate biosynthesis; pyridoxine 5'-phosphate from D-erythrose 4-phosphate: step 4/5. Catalyzes the NAD(P)-dependent oxidation of 4-(phosphooxy)-L-threonine (HTP) into 2-amino-3-oxo-4-(phosphooxy)butyric acid which spontaneously decarboxylates to form 3-amino-2-oxopropyl phosphate (AHAP). The sequence is that of 4-hydroxythreonine-4-phosphate dehydrogenase from Xanthomonas campestris pv. campestris (strain B100).